A 496-amino-acid polypeptide reads, in one-letter code: Docking protein 3 (496 aa).

The interval 18 to 38 (LSLDGGTGSGQKGKCEEFPSS) is disordered. Residues 63-179 (PIKDGILYQQ…WMGPICQLAF (117 aa)) form the PH domain. Phosphoserine is present on serine 194. The region spanning 213–317 (EVGEFPVVVQ…ARQRERLPEL (105 aa)) is the IRS-type PTB domain. Residues 313-363 (RLPELTRPQPCPLPRATSLPSLDTPGELREMPPGPEPPTSRKMHLAEPGPQ) are disordered. Serine 330 and serine 364 each carry phosphoserine. Phosphotyrosine is present on tyrosine 381. The interval 408–447 (PTLHGGEPEPHEGPGSRSPTTSPIYHNGQDLSWPGPANDS) is disordered. Serine 425 is subject to Phosphoserine.

This sequence belongs to the DOK family. Type A subfamily. In terms of assembly, on tyrosine phosphorylation, interacts with CSK and INPP5D/SHIP1 via their SH2 domains. Both Tyr-381 and Tyr-398 are required for interaction with INPP5D. Only Tyr-381 is required for interaction with CSK. Binds ABL1 through the PTB domain and in a kinase-dependent manner. Does not interact with RasGAP. Constitutively tyrosine-phosphorylated. In terms of processing, on IL2 stimulation, phosphorylated on C-terminal tyrosine residues possibly by Src kinases. Can also be phosphorylated by ABL1 kinase. Expressed in spleen.

The protein localises to the cytoplasm. Its subcellular location is the cell membrane. Its function is as follows. DOK proteins are enzymatically inert adaptor or scaffolding proteins. They provide a docking platform for the assembly of multimolecular signaling complexes. DOK3 is a negative regulator of JNK signaling in B-cells through interaction with INPP5D/SHIP1. May modulate ABL1 function. The protein is Docking protein 3 (DOK3) of Homo sapiens (Human).